A 158-amino-acid polypeptide reads, in one-letter code: 2-C-methyl-D-erythritol 2,4-cyclodiphosphate synthase (158 aa).

A divalent metal cation-binding residues include Asp-9 and His-11. 4-CDP-2-C-methyl-D-erythritol 2-phosphate is bound by residues 9-11 and 35-36; these read DVH and HS. A divalent metal cation is bound at residue His-43. Residues 57 to 59, 62 to 66, 101 to 107, 133 to 136, Phe-140, and Arg-143 contribute to the 4-CDP-2-C-methyl-D-erythritol 2-phosphate site; these read DIG, FPDTD, AQKPKMA, and TTTE.

Belongs to the IspF family. In terms of assembly, homotrimer. It depends on a divalent metal cation as a cofactor.

It catalyses the reaction 4-CDP-2-C-methyl-D-erythritol 2-phosphate = 2-C-methyl-D-erythritol 2,4-cyclic diphosphate + CMP. It functions in the pathway isoprenoid biosynthesis; isopentenyl diphosphate biosynthesis via DXP pathway; isopentenyl diphosphate from 1-deoxy-D-xylulose 5-phosphate: step 4/6. Involved in the biosynthesis of isopentenyl diphosphate (IPP) and dimethylallyl diphosphate (DMAPP), two major building blocks of isoprenoid compounds. Catalyzes the conversion of 4-diphosphocytidyl-2-C-methyl-D-erythritol 2-phosphate (CDP-ME2P) to 2-C-methyl-D-erythritol 2,4-cyclodiphosphate (ME-CPP) with a corresponding release of cytidine 5-monophosphate (CMP). This chain is 2-C-methyl-D-erythritol 2,4-cyclodiphosphate synthase, found in Bacillus thuringiensis subsp. konkukian (strain 97-27).